We begin with the raw amino-acid sequence, 984 residues long: Ephrin type-B receptor 1 (984 aa).

The first 17 residues, 1 to 17 (MALDCLLLFLLASAVAA), serve as a signal peptide directing secretion. Topologically, residues 18-540 (MEETLMDTRT…YKSELREQLP (523 aa)) are extracellular. An Eph LBD domain is found at 19-201 (EETLMDTRTA…FFKKCPSIVQ (183 aa)). Fibronectin type-III domains are found at residues 322-432 (VPSG…TNQA) and 433-528 (APST…TLTD). N-linked (GlcNAc...) asparagine glycans are attached at residues asparagine 334, asparagine 426, and asparagine 480. The chain crosses the membrane as a helical span at residues 541 to 563 (LIAGSAAAGVVFVVSLVAISIVC). Topologically, residues 564–984 (SRKRAYSKEA…QMNQSPSVMA (421 aa)) are cytoplasmic. Phosphotyrosine is present on tyrosine 600. In terms of domain architecture, Protein kinase spans 619–882 (VKIEEVIGAG…EIVNTLDKMI (264 aa)). ATP contacts are provided by residues 625 to 633 (IGAGEFGEV) and lysine 651. Residue aspartate 744 is the Proton acceptor of the active site. Residues 911–975 (TAFTTVDDWL…LSSIHSMRVQ (65 aa)) form the SAM domain. Position 928 is a phosphotyrosine; by autocatalysis (tyrosine 928). Residues 982–984 (VMA) carry the PDZ-binding motif.

The protein belongs to the protein kinase superfamily. Tyr protein kinase family. Ephrin receptor subfamily. As to quaternary structure, heterotetramer upon binding of the ligand. The heterotetramer is composed of an ephrin dimer and a receptor dimer. Oligomerization is probably required to induce biological responses. Interacts with EPHB6; transphosphorylates EPHB6 to form an active signaling complex. Interacts with PICK1. Interacts (through Tyr-594) with NCK1 (via SH2 domain); activates the JUN cascade to regulate cell adhesion. The ligand-activated form interacts (through Tyr-928) with GRB7 and GRB10 (via SH2 domains). The ligand-activated form interacts (residues within the catalytic domain) with GRB2 (via SH2 domain). Interacts with GRB2, SHC1 and SRC; activates the MAPK/ERK cascade to regulate cell migration. Interacts with CBL; regulates receptor degradation through ubiquitination. Interacts with ACP1. Post-translationally, phosphorylated. Autophosphorylation is stimulated by the ligand EFNB1. Required for interaction with SH2 domain-containing interactors, for activation of the MAPK/ERK and JUN signaling cascades and for ubiquitination by CBL. Ubiquitinated; (EFNB1)ligand-induced poly- and/or multi-ubiquitination by CBL is regulated by SRC and leads to lysosomal degradation. As to expression, expressed in neural stem and progenitor cells in the dentate gyrus. Expressed in myogenic progenitor cells.

The protein resides in the cell membrane. It is found in the early endosome membrane. Its subcellular location is the cell projection. The protein localises to the dendrite. It carries out the reaction L-tyrosyl-[protein] + ATP = O-phospho-L-tyrosyl-[protein] + ADP + H(+). Functionally, receptor tyrosine kinase which binds promiscuously transmembrane ephrin-B family ligands residing on adjacent cells, leading to contact-dependent bidirectional signaling into neighboring cells. The signaling pathway downstream of the receptor is referred to as forward signaling while the signaling pathway downstream of the ephrin ligand is referred to as reverse signaling. Cognate/functional ephrin ligands for this receptor include EFNB1, EFNB2 and EFNB3. During nervous system development, regulates retinal axon guidance redirecting ipsilaterally ventrotemporal retinal ganglion cells axons at the optic chiasm midline. This probably requires repulsive interaction with EFNB2. In the adult nervous system together with EFNB3, regulates chemotaxis, proliferation and polarity of the hippocampus neural progenitors. In addition to its role in axon guidance also plays an important redundant role with other ephrin-B receptors in development and maturation of dendritic spines and synapse formation. May also regulate angiogenesis. More generally, may play a role in targeted cell migration and adhesion. Upon activation by EFNB1 and probably other ephrin-B ligands activates the MAPK/ERK and the JNK signaling cascades to regulate cell migration and adhesion respectively. Involved in the maintenance of the pool of satellite cells (muscle stem cells) by promoting their self-renewal and reducing their activation and differentiation. The sequence is that of Ephrin type-B receptor 1 (Ephb1) from Mus musculus (Mouse).